A 420-amino-acid chain; its full sequence is Gamma-glutamyl phosphate reductase (420 aa).

The protein belongs to the gamma-glutamyl phosphate reductase family.

The protein resides in the cytoplasm. The catalysed reaction is L-glutamate 5-semialdehyde + phosphate + NADP(+) = L-glutamyl 5-phosphate + NADPH + H(+). It functions in the pathway amino-acid biosynthesis; L-proline biosynthesis; L-glutamate 5-semialdehyde from L-glutamate: step 2/2. In terms of biological role, catalyzes the NADPH-dependent reduction of L-glutamate 5-phosphate into L-glutamate 5-semialdehyde and phosphate. The product spontaneously undergoes cyclization to form 1-pyrroline-5-carboxylate. In Shewanella denitrificans (strain OS217 / ATCC BAA-1090 / DSM 15013), this protein is Gamma-glutamyl phosphate reductase.